Consider the following 165-residue polypeptide: UPF0114 protein Ent638_3411 (165 aa).

A run of 3 helical transmembrane segments spans residues 15–35 (LLAP…IKFF), 53–73 (LILV…LVMV), and 136–156 (LMWY…MGYL).

This sequence belongs to the UPF0114 family.

The protein localises to the cell membrane. The chain is UPF0114 protein Ent638_3411 from Enterobacter sp. (strain 638).